The sequence spans 224 residues: 2-C-methyl-D-erythritol 4-phosphate cytidylyltransferase (224 aa).

Belongs to the IspD/TarI cytidylyltransferase family. IspD subfamily.

The enzyme catalyses 2-C-methyl-D-erythritol 4-phosphate + CTP + H(+) = 4-CDP-2-C-methyl-D-erythritol + diphosphate. It functions in the pathway isoprenoid biosynthesis; isopentenyl diphosphate biosynthesis via DXP pathway; isopentenyl diphosphate from 1-deoxy-D-xylulose 5-phosphate: step 2/6. Catalyzes the formation of 4-diphosphocytidyl-2-C-methyl-D-erythritol from CTP and 2-C-methyl-D-erythritol 4-phosphate (MEP). This Saccharopolyspora erythraea (strain ATCC 11635 / DSM 40517 / JCM 4748 / NBRC 13426 / NCIMB 8594 / NRRL 2338) protein is 2-C-methyl-D-erythritol 4-phosphate cytidylyltransferase.